The sequence spans 181 residues: Histone H1 (181 aa).

Disordered regions lie at residues 1–23 and 81–181; these read MTETTSAKPKKVSKPKAKPTHPP and TKGA…PKKK. A compositionally biased stretch (basic residues) spans 8–19; sequence KPKKVSKPKAKP. One can recognise an H15 domain in the interval 20–94; that stretch reads THPPTSVMVM…GASGSFKLAA (75 aa). 2 stretches are compositionally biased toward basic residues: residues 103 to 119 and 145 to 181; these read AVAKPKKAKTPKKKAAA and KPKKAKTPKKKAAPAKKTPVKKVKKTSPKKKAAPKKK.

The protein belongs to the histone H1/H5 family.

The protein localises to the nucleus. It is found in the chromosome. Its function is as follows. Histones H1 are necessary for the condensation of nucleosome chains into higher-order structures. This Tigriopus californicus (Marine copepod) protein is Histone H1.